The primary structure comprises 408 residues: tRNA wybutosine-synthesizing protein 2 homolog (408 aa).

S-adenosyl-L-methionine-binding positions include S201, K208, E248, and 276–277 (DN).

It belongs to the class I-like SAM-binding methyltransferase superfamily. TRM5/TYW2 family.

The catalysed reaction is 4-demethylwyosine(37) in tRNA(Phe) + S-adenosyl-L-methionine = 4-demethyl-7-[(3S)-3-amino-3-carboxypropyl]wyosine(37) in tRNA(Phe) + S-methyl-5'-thioadenosine + H(+). Its pathway is tRNA modification; wybutosine-tRNA(Phe) biosynthesis. S-adenosyl-L-methionine-dependent transferase that acts as a component of the wybutosine biosynthesis pathway. Wybutosine is a hyper modified guanosine with a tricyclic base found at the 3'-position adjacent to the anticodon of eukaryotic phenylalanine tRNA. Catalyzes the transfer of the alpha-amino-alpha-carboxypropyl (acp) group from S-adenosyl-L-methionine to the C-7 position of 4-demethylwyosine (imG-14) to produce wybutosine-86. The sequence is that of tRNA wybutosine-synthesizing protein 2 homolog (trmt12) from Danio rerio (Zebrafish).